The primary structure comprises 313 residues: Protein YABBY 3 (313 aa).

The C4-type zinc-finger motif lies at 65-92 (CHYCDTVLVVSVPSSSLFETVTVRCGHC). Disordered regions lie at residues 107–149 (TTAA…SLLD) and 180–221 (NNSP…KRQR). Over residues 112–128 (APPPPPPPPPPPPPPAA) the composition is skewed to pro residues.

The protein belongs to the YABBY family. As to expression, expressed in shoot apex and young inflorescences.

The protein localises to the nucleus. The chain is Protein YABBY 3 (YAB3) from Oryza sativa subsp. japonica (Rice).